The sequence spans 280 residues: 4-diphosphocytidyl-2-C-methyl-D-erythritol kinase (280 aa).

K9 is an active-site residue. ATP is bound at residue 93–103; it reads PVAAGLGGGSS. D135 is a catalytic residue.

It belongs to the GHMP kinase family. IspE subfamily.

It catalyses the reaction 4-CDP-2-C-methyl-D-erythritol + ATP = 4-CDP-2-C-methyl-D-erythritol 2-phosphate + ADP + H(+). Its pathway is isoprenoid biosynthesis; isopentenyl diphosphate biosynthesis via DXP pathway; isopentenyl diphosphate from 1-deoxy-D-xylulose 5-phosphate: step 3/6. Catalyzes the phosphorylation of the position 2 hydroxy group of 4-diphosphocytidyl-2C-methyl-D-erythritol. This chain is 4-diphosphocytidyl-2-C-methyl-D-erythritol kinase, found in Syntrophotalea carbinolica (strain DSM 2380 / NBRC 103641 / GraBd1) (Pelobacter carbinolicus).